Here is a 273-residue protein sequence, read N- to C-terminus: Ribosomal RNA small subunit methyltransferase A (273 aa).

The S-adenosyl-L-methionine site is built by N18, L20, G45, E66, D91, and N113.

Belongs to the class I-like SAM-binding methyltransferase superfamily. rRNA adenine N(6)-methyltransferase family. RsmA subfamily.

It localises to the cytoplasm. The catalysed reaction is adenosine(1518)/adenosine(1519) in 16S rRNA + 4 S-adenosyl-L-methionine = N(6)-dimethyladenosine(1518)/N(6)-dimethyladenosine(1519) in 16S rRNA + 4 S-adenosyl-L-homocysteine + 4 H(+). Its function is as follows. Specifically dimethylates two adjacent adenosines (A1518 and A1519) in the loop of a conserved hairpin near the 3'-end of 16S rRNA in the 30S particle. May play a critical role in biogenesis of 30S subunits. This Salmonella typhimurium (strain LT2 / SGSC1412 / ATCC 700720) protein is Ribosomal RNA small subunit methyltransferase A.